A 239-amino-acid chain; its full sequence is tRNA (guanine-N(7)-)-methyltransferase (239 aa).

S-adenosyl-L-methionine is bound by residues glutamate 69, glutamate 94, aspartate 121, and aspartate 144. Aspartate 144 is an active-site residue. Lysine 148 serves as a coordination point for substrate. The interval 150–155 is interaction with RNA; that stretch reads RHNKRR. Substrate contacts are provided by residues aspartate 180 and 217–220; that span reads TKFE.

The protein belongs to the class I-like SAM-binding methyltransferase superfamily. TrmB family. In terms of assembly, monomer.

The enzyme catalyses guanosine(46) in tRNA + S-adenosyl-L-methionine = N(7)-methylguanosine(46) in tRNA + S-adenosyl-L-homocysteine. The protein operates within tRNA modification; N(7)-methylguanine-tRNA biosynthesis. Functionally, catalyzes the formation of N(7)-methylguanine at position 46 (m7G46) in tRNA. In Escherichia coli O6:H1 (strain CFT073 / ATCC 700928 / UPEC), this protein is tRNA (guanine-N(7)-)-methyltransferase.